The following is a 1171-amino-acid chain: DNA polymerase catalytic subunit (1171 aa).

Disordered stretches follow at residues 647-687, 704-735, and 1149-1171; these read GTPA…PFRT, PGGGAVSSASVGGRAAVSPSETPAEREPEPAP, and VEEEVCESERGGSGLLSSLDSSR. A compositionally biased stretch (pro residues) spans 649–662; that stretch reads PARPPETPARPPET. Composition is skewed to low complexity over residues 663–674 and 709–725; these read PAAGPSGAAHAG and VSSASVGGRAAVSPSET. Over residues 1149 to 1158 the composition is skewed to basic and acidic residues; sequence VEEEVCESER.

Belongs to the DNA polymerase type-B family.

It is found in the host nucleus. It catalyses the reaction DNA(n) + a 2'-deoxyribonucleoside 5'-triphosphate = DNA(n+1) + diphosphate. The chain is DNA polymerase catalytic subunit (DPOL) from Tupaia belangeri (Common tree shrew).